A 152-amino-acid chain; its full sequence is MEKDRNVKKRVITAGTFDILHPGHYEILKFAKSLGDELIVIIARDKTVERLKGRKPIIPENQRREMVEALKPVDKAILGSLNNKLEPILKLKPDIIVLGPDQMTFDEETLKKELEKHNLHPKIVRFKNYKKCPFHSSFDIVKEIVKRYCNKE.

ATP-binding positions include 16–17 (TF), 21–24 (HPGH), D101, and Y129.

This sequence belongs to the archaeal FAD synthase family. In terms of assembly, homodimer. The cofactor is a divalent metal cation.

It catalyses the reaction FMN + ATP + H(+) = FAD + diphosphate. The protein operates within cofactor biosynthesis; FAD biosynthesis; FAD from FMN: step 1/1. Its function is as follows. Catalyzes the transfer of the AMP portion of ATP to flavin mononucleotide (FMN) to produce flavin adenine dinucleotide (FAD) coenzyme. The chain is FAD synthase from Methanocaldococcus vulcanius (strain ATCC 700851 / DSM 12094 / M7) (Methanococcus vulcanius).